The following is a 274-amino-acid chain: Penicillin-insensitive murein endopeptidase (274 aa).

Positions 1–19 (MNKTAIALLALLASSASLA) are cleaved as a signal peptide. 3 disulfides stabilise this stretch: Cys44/Cys265, Cys187/Cys235, and Cys216/Cys223. The Zn(2+) site is built by His110, His113, Asp120, Asp147, His150, and His211.

It belongs to the peptidase M74 family. In terms of assembly, dimer. Requires Zn(2+) as cofactor.

The protein localises to the periplasm. In terms of biological role, murein endopeptidase that cleaves the D-alanyl-meso-2,6-diamino-pimelyl amide bond that connects peptidoglycan strands. Likely plays a role in the removal of murein from the sacculus. The polypeptide is Penicillin-insensitive murein endopeptidase (Shigella sonnei (strain Ss046)).